The chain runs to 236 residues: Small ribosomal subunit protein uS2c (236 aa).

The protein belongs to the universal ribosomal protein uS2 family.

The protein localises to the plastid. It localises to the chloroplast. This Manihot esculenta (Cassava) protein is Small ribosomal subunit protein uS2c (rps2).